The chain runs to 123 residues: Large ribosomal subunit protein eL8 (123 aa).

It belongs to the eukaryotic ribosomal protein eL8 family. May be present in up to 3 copies per 70S ribosome. Part of the 50S ribosomal subunit, where it binds 23S rRNA at its canonical site near the L1 stalk, as well as a possible second 50S binding site near helix 25 and a possible third site on the beak of the 30S subunit. Component of box C/D small ribonucleoprotein (sRNP) particles that contain rpl7ae, FlpA and nop5, plus a guide RNA. These sRNP particles form homodimers, giving rise to an asymmetric holoenzyme. Probably part of the RNase P complex.

It localises to the cytoplasm. In terms of biological role, multifunctional RNA-binding protein that recognizes the K-turn motif in ribosomal RNA, the RNA component of RNase P, box H/ACA, box C/D and box C'/D' sRNAs. Component of the 70S ribosome. Component of a box C/D small ribonucleoprotein (sRNP) particle that is involved in pre-rRNA and tRNA processing. Utilizes the methyl donor S-adenosyl-L-methionine to catalyze the site-specific 2'-hydroxyl methylation of ribose moieties in rRNA and tRNA. Site specificity is provided by a guide RNA that base pairs with the substrate. Methylation occurs at a characteristic distance from the sequence involved in base pairing with the guide RNA. This chain is Large ribosomal subunit protein eL8, found in Pyrococcus furiosus (strain ATCC 43587 / DSM 3638 / JCM 8422 / Vc1).